A 516-amino-acid polypeptide reads, in one-letter code: Threonine synthase 2, chloroplastic (516 aa).

Residues 1-33 (MASFSLPHSATYFPSHSETSLKPHSAASFTVRC) constitute a chloroplast transit peptide. A compositionally biased stretch (polar residues) spans 1-37 (MASFSLPHSATYFPSHSETSLKPHSAASFTVRCTSAS). The segment at 1–55 (MASFSLPHSATYFPSHSETSLKPHSAASFTVRCTSASPAVPPQTPQKPRRSPDEN) is disordered. S-adenosyl-L-methionine is bound by residues 133–135 (PYG), 156–158 (SAF), asparagine 163, leucine 164, lysine 172, and asparagine 178. Lysine 194 is subject to N6-(pyridoxal phosphate)lysine. Pyridoxal 5'-phosphate-binding positions include 326–330 (GNLGN) and threonine 464.

It belongs to the threonine synthase family. Homodimer. Pyridoxal 5'-phosphate serves as cofactor.

It localises to the plastid. Its subcellular location is the chloroplast. The enzyme catalyses O-phospho-L-homoserine + H2O = L-threonine + phosphate. The protein operates within amino-acid biosynthesis; L-threonine biosynthesis; L-threonine from L-aspartate: step 5/5. Allosterically activated by S-adenosyl-methionine (SAM). Catalyzes the gamma-elimination of phosphate from L-phosphohomoserine and the beta-addition of water to produce L-threonine. The protein is Threonine synthase 2, chloroplastic (TS2) of Arabidopsis thaliana (Mouse-ear cress).